We begin with the raw amino-acid sequence, 234 residues long: MADVTVGIVVFPGSNCDHDTEYAVASFPGVKPVMLWHNDHDLKGCDAVILPGGFSYGDYLRCGAIARFSPIMREVIDFAGKGRPVLGICNGFQVLVECGLLEGALIRNAGRRFVSRQTTISVANNATIFTDRYQKGEVLRVPVAHGEGNYYASPETIESLESNGQVVFRYTDAWGNATAEANFNGSMNNIAGIVNKQGNVLGLMPHPERASEKLLGSEDGRRLFESLFAHLAGA.

Residues 5–234 (TVGIVVFPGS…ESLFAHLAGA (230 aa)) enclose the Glutamine amidotransferase type-1 domain. The Nucleophile role is filled by Cys89. Active-site residues include His206 and Glu208.

In terms of assembly, part of the FGAM synthase complex composed of 1 PurL, 1 PurQ and 2 PurS subunits.

The protein resides in the cytoplasm. The enzyme catalyses N(2)-formyl-N(1)-(5-phospho-beta-D-ribosyl)glycinamide + L-glutamine + ATP + H2O = 2-formamido-N(1)-(5-O-phospho-beta-D-ribosyl)acetamidine + L-glutamate + ADP + phosphate + H(+). It carries out the reaction L-glutamine + H2O = L-glutamate + NH4(+). The protein operates within purine metabolism; IMP biosynthesis via de novo pathway; 5-amino-1-(5-phospho-D-ribosyl)imidazole from N(2)-formyl-N(1)-(5-phospho-D-ribosyl)glycinamide: step 1/2. In terms of biological role, part of the phosphoribosylformylglycinamidine synthase complex involved in the purines biosynthetic pathway. Catalyzes the ATP-dependent conversion of formylglycinamide ribonucleotide (FGAR) and glutamine to yield formylglycinamidine ribonucleotide (FGAM) and glutamate. The FGAM synthase complex is composed of three subunits. PurQ produces an ammonia molecule by converting glutamine to glutamate. PurL transfers the ammonia molecule to FGAR to form FGAM in an ATP-dependent manner. PurS interacts with PurQ and PurL and is thought to assist in the transfer of the ammonia molecule from PurQ to PurL. This Chlorobaculum tepidum (strain ATCC 49652 / DSM 12025 / NBRC 103806 / TLS) (Chlorobium tepidum) protein is Phosphoribosylformylglycinamidine synthase subunit PurQ.